The following is a 242-amino-acid chain: Dehydration-responsive element-binding protein 1J (242 aa).

Residues 20–29 (SSATTAATAT) show a composition bias toward low complexity. Residues 20–44 (SSATTAATATGPASPKRPAGRTKFQ) form a disordered region. The segment at residues 50 to 109 (VFRGVRRRGRAGRWVCEVRVPGSRGDRLWVGTFDTAEEAARAHDAAMLAMCGASASLNFT) is a DNA-binding region (AP2/ERF). Residues 143-184 (FQRRGSTAATATATSGDAASTAPPSSSPVLSPNDDNASSAST) form a disordered region. Over residues 148 to 184 (STAATATATSGDAASTAPPSSSPVLSPNDDNASSAST) the composition is skewed to low complexity.

This sequence belongs to the AP2/ERF transcription factor family. ERF subfamily.

The protein localises to the nucleus. In terms of biological role, transcriptional activator that binds specifically to the DNA sequence 5'-[AG]CCGAC-3'. Binding to the C-repeat/DRE element mediates high salinity- and dehydration-inducible transcription. This Oryza sativa subsp. indica (Rice) protein is Dehydration-responsive element-binding protein 1J (DREB1J).